A 273-amino-acid chain; its full sequence is Probable NAD(P)H dehydrogenase (quinone) FQR1-like 2 (273 aa).

The interval 1–60 (MGKGGGCVPSKKKKPATTGDGPGIDDDNDATNAPIQIDDDQTTIDGDRTTATNTGGTTTP) is disordered. Residues 49 to 60 (TTATNTGGTTTP) are compositionally biased toward low complexity. The 189-residue stretch at 75-263 (IFVVFYSMYG…ALAEHQGNYM (189 aa)) folds into the Flavodoxin-like domain. FMN-binding positions include 81 to 85 (SMYGH), 183 to 236 (FFVS…SPYG), and H207. Y83 provides a ligand contact to NAD(+).

It belongs to the WrbA family. Requires FMN as cofactor.

Its subcellular location is the cell membrane. The enzyme catalyses a quinone + NADH + H(+) = a quinol + NAD(+). It catalyses the reaction a quinone + NADPH + H(+) = a quinol + NADP(+). Functionally, catalyzes the transfer of electrons from NADH and NADPH to reduce quinone to the hydroquinone state. The sequence is that of Probable NAD(P)H dehydrogenase (quinone) FQR1-like 2 from Arabidopsis thaliana (Mouse-ear cress).